Reading from the N-terminus, the 608-residue chain is Nuclear receptor subfamily 2 group C member 1 (608 aa).

The interval 1–179 (MASIEEIAHQ…RLQRCIAFGM (179 aa)) is required for interaction with KAT2B. The nuclear receptor DNA-binding region spans 111–186 (FDLCVVCGDK…FGMKQDSVQC (76 aa)). 2 consecutive NR C4-type zinc fingers follow at residues 114 to 134 (CVVC…CEGC) and 150 to 169 (CRGS…CQYC). Phosphoserine occurs at positions 198 and 216. The residue at position 221 (threonine 221) is a Phosphothreonine. Threonine 223 is modified (phosphothreonine; by MAPK1). Residue lysine 251 forms a Glycyl lysine isopeptide (Lys-Gly) (interchain with G-Cter in SUMO); alternate linkage. A Glycyl lysine isopeptide (Lys-Gly) (interchain with G-Cter in SUMO2); alternate cross-link involves residue lysine 251. Positions 353–595 (GNVHLIAGDS…SVIPHILKME (243 aa)) constitute an NR LBD domain. Serine 586 is modified (phosphoserine; by PKC). The tract at residues 589–608 (PHILKMEPADYNSQIIGHSI) is required for interaction with NRIP1. Lysine 593 participates in a covalent cross-link: Glycyl lysine isopeptide (Lys-Gly) (interchain with G-Cter in SUMO2).

This sequence belongs to the nuclear hormone receptor family. NR2 subfamily. In terms of assembly, homodimer. Heterodimer; with NR2C2 which is required for chromatin remodeling and for binding to promoter regions such as globin DR1 repeats. Interacts with ESR1; the interaction prevents homodimerization of ESR1 and suppresses its transcriptional activity and cell growth. Interacts with NRIP1 (via its LXXLL motifs); the interaction provides corepressor activity. Interacts with HDAC3 (via the DNA-binding domain); the interaction recruits phosphorylated NR2C1 to PML bodies for sumoylation. Interacts with HDAC4 (via the DNA-binding domain). Interacts with PIAS1; the interaction is required for sumoylation of NR2C1. Interacts with UBE2I; the interaction is required for sumoylation of NR2C1. Interacts with KAT2B; the interaction acts as a corepressor of gene expression. Post-translationally, sumoylation requires both PIAS1 and UBE2I. Sumoylation appears to dissociate NR2C1 from the PML nuclear bodies. Enhances the interaction with NRIP1 but inhibits interaction with KAT2B. In proliferating cells, stimulation by all-trans retinoic acid, activation of MAPK1-mediated phosphorylation and recruitment to PML bodies with subsequent sumoylation, suppresses OCT4 expression. In terms of processing, phosphorylated on several serine and threonine residues. Phosphorylation on Thr-223, stimulated by all-trans retinoic acid (atRA) mediates PML location and sumoylation in proliferating cells which then modulates its association with effector molecules, KAT2B and NRIP1. Phosphorylation on Ser-586 by PKC is important for protein stability and function as activator of RARB.

Its subcellular location is the nucleus. The protein localises to the PML body. In terms of biological role, orphan nuclear receptor. Binds the IR7 element in the promoter of its own gene in an autoregulatory negative feedback mechanism. Primarily repressor of a broad range of genes including ESR1 and RARB. Together with NR2C2, forms the core of the DRED (direct repeat erythroid-definitive) complex that represses embryonic and fetal globin transcription. Binds to hormone response elements (HREs) consisting of two 5'-AGGTCA-3' half site direct repeat consensus sequences. Also activator of OCT4 gene expression. Plays a fundamental role in early embryogenesis and regulates embryonic stem cell proliferation and differentiation. Mediator of retinoic acid-regulated preadipocyte proliferation. This is Nuclear receptor subfamily 2 group C member 1 (NR2C1) from Bos taurus (Bovine).